The chain runs to 477 residues: MATTCEEVLVSPVKSTAVTPLKIRELINEGIVCGERSGIGRKEASETPEENTAFEDLPGNNSYESTSKDAFFSRVESFSSLKWAGKPPELCPLICAKYGWCNIECDMLKCSSCNAYLCASLQPILDFSKYKQRCVELQEALRKAHEKFCFWPDSPCPEHFWALLVTEPSSVLSDFVERFHNLCHLEMQLPSLKHEDVKSMDITEDTVSRLLRLIEDELKPKEGREANSHSLPSDSLQVHISACILALCGWNTSFSSGSLCIINCPRCMRKVGLWAFQQLETVELDNSLSAPGTPVSPAEGHERSPLGFMSPSRRVTRSRDAEQSPAFAYGRTRSSDLLSPADSEAVRNRPVTRSMGQGENTGLGNELHSSPHRRAKRPRLCSSSSSDTSPRSCFDPLSQHRSWCPWVNVCQASGTNTMGSEIQEEARRKEYGWKEVLKVLLAEENSRTISNPDTSSVPEKSHKVFRIFRQWQLAASS.

Residues 95–149 (CAKYGWCNIECDMLKCSSCNAYLCASLQPILDFSKYKQRCVELQEALRKAHEKFC) form a C3HC-type zinc finger. The segment at 287-392 (SLSAPGTPVS…SSSSDTSPRS (106 aa)) is disordered. Residues 354 to 363 (SMGQGENTGL) are compositionally biased toward polar residues. Residues 370–379 (SPHRRAKRPR) show a composition bias toward basic residues. Residues 382–392 (SSSSSDTSPRS) are compositionally biased toward low complexity.

Phosphorylated. May also be weakly phosphorylated on Tyr residues.

The protein localises to the nucleus. It localises to the nucleus envelope. Its function is as follows. Required for proper positioning of a substantial amount of TPR at the nuclear basket (NB) through interaction with TPR. The chain is Zinc finger C3HC-type protein 1-like (zc3hc1) from Xenopus laevis (African clawed frog).